A 174-amino-acid chain; its full sequence is UPF0336 protein MAP_3996c (174 aa).

One can recognise a MaoC-like domain in the interval 11–131 (IGSHYRAPDY…VLAEIRSEVT (121 aa)).

The protein belongs to the UPF0336 family.

This chain is UPF0336 protein MAP_3996c, found in Mycolicibacterium paratuberculosis (strain ATCC BAA-968 / K-10) (Mycobacterium paratuberculosis).